The chain runs to 329 residues: Arylacetonitrilase (329 aa).

One can recognise a CN hydrolase domain in the interval 6 to 279; the sequence is VRVAVTQAEP…EGIVYANLDM (274 aa). Glutamate 46 (proton acceptor) is an active-site residue. Lysine 126 is an active-site residue. The active-site Nucleophile is cysteine 161.

This sequence belongs to the carbon-nitrogen hydrolase superfamily. Nitrilase family.

The catalysed reaction is a nitrile + 2 H2O = a carboxylate + NH4(+). The enzyme catalyses 4-chlorophenylacetonitrile + 2 H2O = 4-chlorophenylacetate + NH4(+). Its function is as follows. Nitrilase that hydrolyzes preferentially phenylacetonitrile and heteroaromatic nitriles, but has significantly lower activity for (R,S)-mandelonitrile. Also acts on dinitriles like phenylenediacetonitriles (PDAs) 1,2-PDA, 1,3-PDA, and 1,4-PDA, and cyanophenyl acetonitriles (CPAs) 2-CPA and 4-CPA. The chain is Arylacetonitrilase from Hypocrea virens (strain Gv29-8 / FGSC 10586) (Gliocladium virens).